We begin with the raw amino-acid sequence, 391 residues long: F-box/kelch-repeat protein At4g05080 (391 aa).

In terms of domain architecture, F-box spans 2 to 49 (TMMFDLTQDLVKEILSRVPITSLGAVRSTCKGWNALSKDRILCKAKPK). Kelch repeat units lie at residues 100 to 143 (HMYY…TFCL) and 144 to 194 (RYDN…SASV). Basic residues predominate over residues 369 to 385 (RRRRERNSKRKEKKRKG). The disordered stretch occupies residues 369–391 (RRRRERNSKRKEKKRKGTTNNKV).

This chain is F-box/kelch-repeat protein At4g05080, found in Arabidopsis thaliana (Mouse-ear cress).